A 289-amino-acid polypeptide reads, in one-letter code: 33 kDa chaperonin (289 aa).

2 disulfides stabilise this stretch: cysteine 225/cysteine 227 and cysteine 258/cysteine 261.

Belongs to the HSP33 family. Under oxidizing conditions two disulfide bonds are formed involving the reactive cysteines. Under reducing conditions zinc is bound to the reactive cysteines and the protein is inactive.

The protein resides in the cytoplasm. Redox regulated molecular chaperone. Protects both thermally unfolding and oxidatively damaged proteins from irreversible aggregation. Plays an important role in the bacterial defense system toward oxidative stress. This is 33 kDa chaperonin from Nitrosococcus oceani (strain ATCC 19707 / BCRC 17464 / JCM 30415 / NCIMB 11848 / C-107).